The sequence spans 327 residues: Protein-L-isoaspartate O-methyltransferase (327 aa).

Disordered stretches follow at residues 1 to 38 (MSGE…DAAR) and 62 to 105 (PRAA…KSAT). Over residues 14-29 (EDLKREPRKPEGRAAE) the composition is skewed to basic and acidic residues. A compositionally biased stretch (low complexity) spans 62–77 (PRAAGASGSGVPVAKP). Polar residues predominate over residues 92 to 105 (APSSGVKNGDKSAT). Residue Ser-175 is part of the active site.

The protein belongs to the methyltransferase superfamily. L-isoaspartyl/D-aspartyl protein methyltransferase family.

It localises to the cytoplasm. The catalysed reaction is [protein]-L-isoaspartate + S-adenosyl-L-methionine = [protein]-L-isoaspartate alpha-methyl ester + S-adenosyl-L-homocysteine. Catalyzes the methyl esterification of L-isoaspartyl residues in peptides and proteins that result from spontaneous decomposition of normal L-aspartyl and L-asparaginyl residues. It plays a role in the repair and/or degradation of damaged proteins. The chain is Protein-L-isoaspartate O-methyltransferase from Burkholderia thailandensis (strain ATCC 700388 / DSM 13276 / CCUG 48851 / CIP 106301 / E264).